A 136-amino-acid polypeptide reads, in one-letter code: Large ribosomal subunit protein uL16 (136 aa).

The segment covering 1-17 has biased composition (basic residues); that stretch reads MLQPKRTKFRKRHKGRN. Positions 1–21 are disordered; sequence MLQPKRTKFRKRHKGRNRGLA.

This sequence belongs to the universal ribosomal protein uL16 family. Part of the 50S ribosomal subunit.

Functionally, binds 23S rRNA and is also seen to make contacts with the A and possibly P site tRNAs. This is Large ribosomal subunit protein uL16 from Buchnera aphidicola subsp. Acyrthosiphon kondoi (Acyrthosiphon kondoi symbiotic bacterium).